The primary structure comprises 71 residues: Small ribosomal subunit protein bS21 (71 aa).

Residues 37 to 71 (HYEKPTQERKRKAAAAVKRHMKRLSREQARRRRLY) form a disordered region. The span at 45-71 (RKRKAAAAVKRHMKRLSREQARRRRLY) shows a compositional bias: basic residues.

Belongs to the bacterial ribosomal protein bS21 family.

The sequence is that of Small ribosomal subunit protein bS21 from Alkalilimnicola ehrlichii (strain ATCC BAA-1101 / DSM 17681 / MLHE-1).